We begin with the raw amino-acid sequence, 228 residues long: Death domain-containing membrane protein NRADD (228 aa).

At 1–52 (MLHNVSKGVVYSDTALKGQDGDREGMWVGAGGALAPNTSSLFPPEPPGASSN) the chain is on the extracellular side. N-linked (GlcNAc...) asparagine glycosylation is found at N4 and N37. Residues 53-73 (IIPVYCALLATVVLGLLAYVA) form a helical; Signal-anchor for type III membrane protein membrane-spanning segment. Over 74–228 (FKCWRSRKQR…SSPAEGCSVV (155 aa)) the chain is Cytoplasmic. Positions 143–222 (EEVQRLLILG…DVVQVLSSPA (80 aa)) constitute a Death domain.

As to quaternary structure, interacts with NTRK1. Isoform 1 and isoform 2 interact with NGFR. Interacts with SORT1. Post-translationally, isoform 1 is N-glycosylated. Isoform 2 is not N-glycosylated. As to expression, detected in embryo, including embryonic brain. Detected at very low levels in adult testis, spleen, thymus and lung.

It is found in the cell membrane. The protein resides in the nucleus. Its function is as follows. Modulates NTRK1 signaling. Can activate several intracellular signaling pathways, leading to activation of JUN. Promotes translocation of SORT1 to the cell membrane, and thereby hinders lysosomal degradation of SOTR1 and promotes its interaction with NGFR. Both isoform 1 and isoform 2 promote apoptosis. The polypeptide is Death domain-containing membrane protein NRADD (Nradd) (Rattus norvegicus (Rat)).